The following is a 459-amino-acid chain: tRNA modification GTPase MnmE (459 aa).

Positions 22, 87, and 126 each coordinate (6S)-5-formyl-5,6,7,8-tetrahydrofolate. The 161-residue stretch at 221–381 (GINVAICGKP…LEESIEKAVL (161 aa)) folds into the TrmE-type G domain. Asparagine 231 is a binding site for K(+). GTP-binding positions include 231–236 (NVGKSS), 250–256 (TSIPGTT), and 275–278 (DTAG). Mg(2+) is bound at residue serine 235. K(+)-binding residues include threonine 250, isoleucine 252, and threonine 255. Mg(2+) is bound at residue threonine 256. Residue lysine 459 participates in (6S)-5-formyl-5,6,7,8-tetrahydrofolate binding.

Belongs to the TRAFAC class TrmE-Era-EngA-EngB-Septin-like GTPase superfamily. TrmE GTPase family. As to quaternary structure, homodimer. Heterotetramer of two MnmE and two MnmG subunits. It depends on K(+) as a cofactor.

It is found in the cytoplasm. Exhibits a very high intrinsic GTPase hydrolysis rate. Involved in the addition of a carboxymethylaminomethyl (cmnm) group at the wobble position (U34) of certain tRNAs, forming tRNA-cmnm(5)s(2)U34. This is tRNA modification GTPase MnmE from Syntrophomonas wolfei subsp. wolfei (strain DSM 2245B / Goettingen).